Consider the following 301-residue polypeptide: Lipoyl synthase (301 aa).

Positions 37, 42, 48, 63, 67, 70, and 276 each coordinate [4Fe-4S] cluster. In terms of domain architecture, Radical SAM core spans 49–265 (WSKKHATVMI…ERIARTKGFL (217 aa)).

It belongs to the radical SAM superfamily. Lipoyl synthase family. [4Fe-4S] cluster is required as a cofactor.

It localises to the cytoplasm. It catalyses the reaction [[Fe-S] cluster scaffold protein carrying a second [4Fe-4S](2+) cluster] + N(6)-octanoyl-L-lysyl-[protein] + 2 oxidized [2Fe-2S]-[ferredoxin] + 2 S-adenosyl-L-methionine + 4 H(+) = [[Fe-S] cluster scaffold protein] + N(6)-[(R)-dihydrolipoyl]-L-lysyl-[protein] + 4 Fe(3+) + 2 hydrogen sulfide + 2 5'-deoxyadenosine + 2 L-methionine + 2 reduced [2Fe-2S]-[ferredoxin]. Its pathway is protein modification; protein lipoylation via endogenous pathway; protein N(6)-(lipoyl)lysine from octanoyl-[acyl-carrier-protein]: step 2/2. Its function is as follows. Catalyzes the radical-mediated insertion of two sulfur atoms into the C-6 and C-8 positions of the octanoyl moiety bound to the lipoyl domains of lipoate-dependent enzymes, thereby converting the octanoylated domains into lipoylated derivatives. In Rickettsia felis (strain ATCC VR-1525 / URRWXCal2) (Rickettsia azadi), this protein is Lipoyl synthase.